Reading from the N-terminus, the 160-residue chain is Calsequestrin-2 (160 aa).

It belongs to the calsequestrin family. In terms of assembly, monomer, homodimer and homooligomer. Mostly monomeric in the absence of calcium. Forms higher oligomers in a calcium-dependent manner. Dimers associate to form tetramers, that then form linear homomer chains. Interacts with ASPH and TRDN. Phosphorylation in the C-terminus, probably by CK2, moderately increases calcium buffering capacity. Post-translationally, N-glycosylated.

It is found in the sarcoplasmic reticulum lumen. Functionally, calsequestrin is a high-capacity, moderate affinity, calcium-binding protein and thus acts as an internal calcium store in muscle. Calcium ions are bound by clusters of acidic residues at the protein surface, especially at the interface between subunits. Can bind around 60 Ca(2+) ions. Regulates the release of lumenal Ca(2+) via the calcium release channel RYR2; this plays an important role in triggering muscle contraction. Plays a role in excitation-contraction coupling in the heart and in regulating the rate of heart beats. The protein is Calsequestrin-2 (CASQ2) of Sus scrofa (Pig).